The sequence spans 473 residues: H(+)/Cl(-) exchange transporter ClcA (473 aa).

Over 1-32 (MKTDTPSLETPQAARLRRRQLIRQLLERDKTP) the chain is Cytoplasmic. Residues 33–69 (LAILFMAAVVGTLVGLAAVAFDKGVAWLQNQRMGALV) traverse the membrane as a helical segment. Topologically, residues 70 to 76 (HTADNYP) are periplasmic. A helical transmembrane segment spans residues 77 to 100 (LLLTVAFLCSAVLAMFGYFLVRKY). The Selectivity filter part_1 signature appears at 106 to 110 (GSGIP). Serine 107 provides a ligand contact to chloride. The segment at residues 109-116 (IPEIEGAL) is an intramembrane region (helical). At 117 to 123 (EDQRPVR) the chain is on the cytoplasmic side. 2 consecutive transmembrane segments (helical) span residues 124 to 141 (WWRV…TLGG) and 148 to 166 (EGPT…LDIF). Residues 146-150 (GREGP) carry the Selectivity filter part_2 motif. Residues 167–176 (RLKGDEARHT) lie on the Cytoplasmic side of the membrane. 2 intramembrane regions (helical) span residues 177 to 189 (LLAT…LAAA) and 193 to 201 (PLAGILFII). The Cytoplasmic segment spans residues 202–214 (EEMRPQFRYTLIS). Residues 215-232 (IKAVFIGVIMSTIMYRIF) form a helical membrane-spanning segment. Residues 233–252 (NHEVALIDVGKLSDAPLNTL) are Periplasmic-facing. Residues 253 to 281 (WLYLILGIIFGIFGPIFNKWVLGMQDLLH) traverse the membrane as a helical segment. The Cytoplasmic portion of the chain corresponds to 282 to 287 (RVHGGN). The helical transmembrane segment at 288–309 (ITKWVLMGGAIGGLCGLLGFVA) threads the bilayer. Residues 310-329 (PATSGGGFNLIPIATAGNFS) lie on the Periplasmic side of the membrane. A run of 2 helical transmembrane segments spans residues 330–349 (MGML…LCFS) and 355–376 (GIFA…MVAV). A Selectivity filter part_3 motif is present at residues 355 to 359 (GIFAP). The chloride site is built by isoleucine 356 and phenylalanine 357. At 377 to 386 (ELFPQYHLEA) the chain is on the periplasmic side. An intramembrane region (helical) is located at residues 387–401 (GTFAIAGMGALLAAS). The note=Loop between two helices intramembrane region spans 402 to 404 (IRA). The segment at residues 405–416 (PLTGIILVLEMT) is an intramembrane region (helical). An intramembrane region (note=Loop between two helices) is located at residues 417 to 421 (DNYQL). A helical membrane pass occupies residues 422–438 (ILPMIITGLGATLLAQF). The Cytoplasmic segment spans residues 439-473 (TGGKPLYSAILARTLAKQEAEQLARSKAASASENT). Residue tyrosine 445 participates in chloride binding.

Belongs to the chloride channel (TC 2.A.49) family. ClcA subfamily. As to quaternary structure, homodimer.

The protein resides in the cell inner membrane. The catalysed reaction is 2 chloride(in) + H(+)(out) = 2 chloride(out) + H(+)(in). In terms of biological role, proton-coupled chloride transporter. Functions as antiport system and exchanges two chloride ions for 1 proton. Probably acts as an electrical shunt for an outwardly-directed proton pump that is linked to amino acid decarboxylation, as part of the extreme acid resistance (XAR) response. The chain is H(+)/Cl(-) exchange transporter ClcA from Shigella flexneri serotype 5b (strain 8401).